We begin with the raw amino-acid sequence, 944 residues long: Neutral alpha-glucosidase AB (944 aa).

A signal peptide spans 1-28 (MAAVAAVAARRRRSWASLVLAFLGVCLG). C41 and C47 are oxidised to a cystine. Residue S52 is modified to Phosphoserine. N-linked (GlcNAc...) asparagine glycosylation is present at N97. The interval 181–238 (QRAPRVSQGSKDPAEGDGAQPEETPRDGDKPEETQGKAEKDEPGAWEETFKTHSDSKP) is disordered. The segment covering 203 to 236 (ETPRDGDKPEETQGKAEKDEPGAWEETFKTHSDS) has biased composition (basic and acidic residues). Residues D283 and D429 each contribute to the substrate site. The Nucleophile role is filled by D542. Residue R602 participates in substrate binding. The active-site Proton donor is D618. A disulfide bond links C633 and C644. H676 provides a ligand contact to substrate.

It belongs to the glycosyl hydrolase 31 family. As to quaternary structure, heterodimer of a catalytic alpha subunit (GANAB) and a beta subunit (PRKCSH). Binds glycosylated PTPRC. As to expression, detected in placenta. Isoform 1 and isoform 2 are expressed in the kidney and liver.

It is found in the endoplasmic reticulum. The protein resides in the golgi apparatus. It localises to the melanosome. The enzyme catalyses N(4)-(alpha-D-Glc-(1-&gt;3)-alpha-D-Man-(1-&gt;2)-alpha-D-Man-(1-&gt;2)-alpha-D-Man-(1-&gt;3)-[alpha-D-Man-(1-&gt;2)-alpha-D-Man-(1-&gt;3)-[alpha-D-Man-(1-&gt;2)-alpha-D-Man-(1-&gt;6)]-alpha-D-Man-(1-&gt;6)]-beta-D-Man-(1-&gt;4)-beta-D-GlcNAc-(1-&gt;4)-beta-D-GlcNAc)-L-asparaginyl-[protein] + H2O = N(4)-(alpha-D-Man-(1-&gt;2)-alpha-D-Man-(1-&gt;2)-alpha-D-Man-(1-&gt;3)-[alpha-D-Man-(1-&gt;2)-alpha-D-Man-(1-&gt;3)-[alpha-D-Man-(1-&gt;2)-alpha-D-Man-(1-&gt;6)]-alpha-D-Man-(1-&gt;6)]-beta-D-Man-(1-&gt;4)-beta-D-GlcNAc-(1-&gt;4)-beta-D-GlcNAc)-L-asparaginyl-[protein] (N-glucan mannose isomer 9A1,2,3B1,2,3) + beta-D-glucose. The catalysed reaction is N(4)-(alpha-D-Glc-(1-&gt;3)-alpha-D-Glc-(1-&gt;3)-alpha-D-Man-(1-&gt;2)-alpha-D-Man-(1-&gt;2)-alpha-D-Man-(1-&gt;3)-[alpha-D-Man-(1-&gt;2)-alpha-D-Man-(1-&gt;3)-[alpha-D-Man-(1-&gt;2)-alpha-D-Man-(1-&gt;6)]-alpha-D-Man-(1-&gt;6)]-beta-D-Man-(1-&gt;4)-beta-D-GlcNAc-(1-&gt;4)-beta-D-GlcNAc)-L-asparaginyl-[protein] + H2O = N(4)-(alpha-D-Glc-(1-&gt;3)-alpha-D-Man-(1-&gt;2)-alpha-D-Man-(1-&gt;2)-alpha-D-Man-(1-&gt;3)-[alpha-D-Man-(1-&gt;2)-alpha-D-Man-(1-&gt;3)-[alpha-D-Man-(1-&gt;2)-alpha-D-Man-(1-&gt;6)]-alpha-D-Man-(1-&gt;6)]-beta-D-Man-(1-&gt;4)-beta-D-GlcNAc-(1-&gt;4)-beta-D-GlcNAc)-L-asparaginyl-[protein] + beta-D-glucose. It functions in the pathway glycan metabolism; N-glycan metabolism. With respect to regulation, inhibited by deoxynojirimycin. In terms of biological role, catalytic subunit of glucosidase II that cleaves sequentially the 2 innermost alpha-1,3-linked glucose residues from the Glc(2)Man(9)GlcNAc(2) oligosaccharide precursor of immature glycoproteins. Required for PKD1/Polycystin-1 and PKD2/Polycystin-2 maturation and localization to the cell surface and cilia. This Homo sapiens (Human) protein is Neutral alpha-glucosidase AB.